The chain runs to 331 residues: 6-phosphogluconolactonase (331 aa).

Residue Lys-287 is modified to N6-acetyllysine.

It belongs to the cycloisomerase 2 family.

The enzyme catalyses 6-phospho-D-glucono-1,5-lactone + H2O = 6-phospho-D-gluconate + H(+). It functions in the pathway carbohydrate degradation; pentose phosphate pathway; D-ribulose 5-phosphate from D-glucose 6-phosphate (oxidative stage): step 2/3. Functionally, catalyzes the hydrolysis of 6-phosphogluconolactone to 6-phosphogluconate. The sequence is that of 6-phosphogluconolactonase from Escherichia coli O7:K1 (strain IAI39 / ExPEC).